Here is a 359-residue protein sequence, read N- to C-terminus: Dual-specificity RNA methyltransferase RlmN (359 aa).

E98 (proton acceptor) is an active-site residue. In terms of domain architecture, Radical SAM core spans 104 to 329 (EPKRGTLCIS…LEHGLTATIR (226 aa)). C111 and C340 are disulfide-bonded. Residues C118, C122, and C125 each coordinate [4Fe-4S] cluster. S-adenosyl-L-methionine-binding positions include 166-167 (GE), S198, 220-222 (SLH), and N297. C340 (S-methylcysteine intermediate) is an active-site residue.

The protein belongs to the radical SAM superfamily. RlmN family. Requires [4Fe-4S] cluster as cofactor.

The protein localises to the cytoplasm. The catalysed reaction is adenosine(2503) in 23S rRNA + 2 reduced [2Fe-2S]-[ferredoxin] + 2 S-adenosyl-L-methionine = 2-methyladenosine(2503) in 23S rRNA + 5'-deoxyadenosine + L-methionine + 2 oxidized [2Fe-2S]-[ferredoxin] + S-adenosyl-L-homocysteine. It carries out the reaction adenosine(37) in tRNA + 2 reduced [2Fe-2S]-[ferredoxin] + 2 S-adenosyl-L-methionine = 2-methyladenosine(37) in tRNA + 5'-deoxyadenosine + L-methionine + 2 oxidized [2Fe-2S]-[ferredoxin] + S-adenosyl-L-homocysteine. Functionally, specifically methylates position 2 of adenine 2503 in 23S rRNA and position 2 of adenine 37 in tRNAs. m2A2503 modification seems to play a crucial role in the proofreading step occurring at the peptidyl transferase center and thus would serve to optimize ribosomal fidelity. The protein is Dual-specificity RNA methyltransferase RlmN of Halorhodospira halophila (strain DSM 244 / SL1) (Ectothiorhodospira halophila (strain DSM 244 / SL1)).